Reading from the N-terminus, the 520-residue chain is BBSome complex member BBS4 (520 aa).

The segment at 1–26 (MAEVKLGMKTQVPASVESQKPRSKKA) is disordered. Residues 1–66 (MAEVKLGMKT…EQLQETQGLC (66 aa)) are required for localization to centrosomes. 10 TPR repeats span residues 67–100 (EYAI…SPQC), 102–134 (DNLK…NQKD), 135–167 (WEIC…LNKH), 168–201 (DLTY…SPEN), 203–235 (ELLT…DPAN), 237–269 (KAIL…IPES), 270–303 (PPLW…APFD), 304–337 (WKIL…QPKM), 339–371 (ELYM…DKCN), and 373–408 (LVNL…LKDN). An interaction with PCM1 region spans residues 101-337 (ADNLKQVARS…SAAINFQPKM (237 aa)). Residues 338-520 (GELYMLLAVA…TEASEQKKEK (183 aa)) are required for localization to centrosomes. Residues 488 to 520 (AQLPKPPSLPLEPEPEPTVEASPTEASEQKKEK) form a disordered region.

It belongs to the BBS4 family. In terms of assembly, part of BBSome complex, that contains BBS1, BBS2, BBS4, BBS5, BBS7, BBS8/TTC8, BBS9 and BBIP10. Interacts with PCM1 and DCTN1. Interacts with DC28B. Interacts with ALDOB and C2CD3. Interacts with PKD1. Interacts with CEP290. Interacts with DLEC1. Expressed in the hippocampus and dentate gyrus, the columnar epithelial cells of bronchioles, the olfactory epithelium and the inner segment and outer nuclear layer of the retina. Expressed in testis.

It is found in the cytoplasm. Its subcellular location is the cytoskeleton. The protein localises to the microtubule organizing center. It localises to the centrosome. The protein resides in the cell projection. It is found in the cilium membrane. Its subcellular location is the centriolar satellite. The protein localises to the cilium. It localises to the flagellum. In terms of biological role, the BBSome complex is thought to function as a coat complex required for sorting of specific membrane proteins to the primary cilia. The BBSome complex is required for ciliogenesis but is dispensable for centriolar satellite function. This ciliogenic function is mediated in part by the Rab8 GDP/GTP exchange factor, which localizes to the basal body and contacts the BBSome. Rab8(GTP) enters the primary cilium and promotes extension of the ciliary membrane. Firstly the BBSome associates with the ciliary membrane and binds to RAB3IP/Rabin8, the guanosyl exchange factor (GEF) for Rab8 and then the Rab8-GTP localizes to the cilium and promotes docking and fusion of carrier vesicles to the base of the ciliary membrane. The BBSome complex, together with the LTZL1, controls SMO ciliary trafficking and contributes to the sonic hedgehog (SHH) pathway regulation. Required for proper BBSome complex assembly and its ciliary localization. Required for microtubule anchoring at the centrosome but not for microtubule nucleation. May be required for the dynein-mediated transport of pericentriolar proteins to the centrosome. This is BBSome complex member BBS4 (Bbs4) from Mus musculus (Mouse).